A 255-amino-acid polypeptide reads, in one-letter code: MNDYIVVKCGGSMLEQLNDVFFDCIKKLQQQYKVVIVHGGGPEIDAKLKDCNINVEKRDGLRVTPKEVMDVVQMVLCGSTNKKFVMNLQKHNLLAVGCSGCDGKLLQVQPVSEEIGYVGEVSYVETALLKGLINMNYIPVIAPIGIHDNEIYNINADTAAAGIAAALSAKELILITDVDGILHEGKLVKKTDESEIATLIEKGVITGGMIPKVQAALASLKMGVQKISIVNRTKDFTEDTGECIGTTVTRGVSIV.

Residues 40–41 (GG), Arg-62, and Asn-153 contribute to the substrate site.

Belongs to the acetylglutamate kinase family. ArgB subfamily.

It localises to the cytoplasm. The catalysed reaction is N-acetyl-L-glutamate + ATP = N-acetyl-L-glutamyl 5-phosphate + ADP. It participates in amino-acid biosynthesis; L-arginine biosynthesis; N(2)-acetyl-L-ornithine from L-glutamate: step 2/4. Functionally, catalyzes the ATP-dependent phosphorylation of N-acetyl-L-glutamate. The sequence is that of Acetylglutamate kinase from Bacillus anthracis (strain CDC 684 / NRRL 3495).